The sequence spans 373 residues: 3 beta-hydroxysteroid dehydrogenase/Delta 5--&gt;4-isomerase type 3 (373 aa).

The active-site Proton acceptor is the Tyr155. Lys159 is a binding site for NAD(+). The helical transmembrane segment at 288-308 threads the bilayer; that stretch reads VPILYWLAFLLETVSFLLSPI.

The protein belongs to the 3-beta-HSD family. In terms of tissue distribution, liver and kidney. Greater expression in liver.

The protein localises to the endoplasmic reticulum membrane. It localises to the mitochondrion membrane. It carries out the reaction a 3beta-hydroxy-Delta(5)-steroid + NAD(+) = a 3-oxo-Delta(5)-steroid + NADH + H(+). The catalysed reaction is a 3-oxo-Delta(5)-steroid = a 3-oxo-Delta(4)-steroid. Its pathway is lipid metabolism; steroid biosynthesis. 3-beta-HSD is a bifunctional enzyme, that catalyzes the oxidative conversion of Delta(5)-ene-3-beta-hydroxy steroid, and the oxidative conversion of ketosteroids. The 3-beta-HSD enzymatic system plays a crucial role in the biosynthesis of all classes of hormonal steroids. The sequence is that of 3 beta-hydroxysteroid dehydrogenase/Delta 5--&gt;4-isomerase type 3 (Hsd3b3) from Mus musculus (Mouse).